A 73-amino-acid chain; its full sequence is MKTLHLLLLISGLLSVFVKGVGSHPGTVHVRFKCIPKIAAVFGDNCPFYGNVDGLCNDKKSVCCMVPVRLDNI.

The first 23 residues, 1–23 (MKTLHLLLLISGLLSVFVKGVGS), serve as a signal peptide directing secretion. 2 disulfides stabilise this stretch: Cys34-Cys63 and Cys46-Cys64.

Belongs to the beta-defensin family.

Its subcellular location is the secreted. Its function is as follows. Has bactericidal activity. This Rattus norvegicus (Rat) protein is Beta-defensin 50 (Defb50).